The following is a 245-amino-acid chain: Probable transcriptional regulatory protein LVIS_1199 (245 aa).

Residues methionine 1–lysine 23 are disordered.

This sequence belongs to the TACO1 family.

Its subcellular location is the cytoplasm. This is Probable transcriptional regulatory protein LVIS_1199 from Levilactobacillus brevis (strain ATCC 367 / BCRC 12310 / CIP 105137 / JCM 1170 / LMG 11437 / NCIMB 947 / NCTC 947) (Lactobacillus brevis).